The following is an 86-amino-acid chain: MEFKIMSTTDKIEQKVIEMVAEKLNKDKSIITTDSRFIEDLKADSLDTVELMMAIEVEYGIDIPDDEATKIKTVSDVIKYIKERQS.

A Carrier domain is found at 10 to 85; that stretch reads DKIEQKVIEM…DVIKYIKERQ (76 aa). Position 45 is an O-(pantetheine 4'-phosphoryl)serine (S45).

Belongs to the acyl carrier protein (ACP) family. In terms of processing, 4'-phosphopantetheine is transferred from CoA to a specific serine of apo-ACP by AcpS. This modification is essential for activity because fatty acids are bound in thioester linkage to the sulfhydryl of the prosthetic group.

Its subcellular location is the cytoplasm. The protein operates within lipid metabolism; fatty acid biosynthesis. Its function is as follows. Carrier of the growing fatty acid chain in fatty acid biosynthesis. The protein is Acyl carrier protein of Rickettsia africae (strain ESF-5).